Consider the following 459-residue polypeptide: Sulfide:quinone oxidoreductase, mitochondrial (459 aa).

The N-terminal 24 residues, 1-24 (MLTLNSTIKSVTGSFQSASMLARF), are a transit peptide targeting the mitochondrion. FAD is bound at residue 35–39 (GGGSA). Residues Cys204 and Cys383 each act as cysteine persulfide intermediate in the active site.

Belongs to the SQRD family. The cofactor is FAD.

The protein localises to the mitochondrion. In terms of biological role, catalyzes the oxidation of hydrogen sulfide, with the help of a quinone. This chain is Sulfide:quinone oxidoreductase, mitochondrial (hmt2), found in Schizosaccharomyces pombe (strain 972 / ATCC 24843) (Fission yeast).